The chain runs to 1121 residues: PR domain zinc finger protein 10 (1121 aa).

Disordered regions lie at residues 1-24 and 92-125; these read MEAK…NTPQ and TEAS…MDDW. Residues 106 to 124 are compositionally biased toward acidic residues; it reads VDSEDEEEDNDSEDSEMDD. The SET domain occupies 173-290; sequence LPLVLYIDRF…PKQELKVWYA (118 aa). Positions 192-295 are N-terminal PR domain; essential for transcriptional activation; the sequence is IPKRTQFGPL…KVWYAASYAE (104 aa). The C2H2-type 1 zinc-finger motif lies at 319–341; sequence WPCYECNRRFMSSEQLQQHLNMH. 2 disordered regions span residues 350–387 and 419–473; these read RPKS…SADK and ESME…PHLT. The span at 351-374 shows a compositional bias: basic residues; it reads PKSRGRGRGRKRFGGARRPGRRTK. 9 consecutive C2H2-type zinc fingers follow at residues 500-522, 529-551, 557-579, 585-608, 613-635, 641-664, 696-719, 741-764, and 803-826; these read FKCP…MRFH, HVCH…LVLH, YSCL…VGIH, FLCP…RSFH, FQCS…MLRH, FLCS…QRMH, FKCR…SKRH, YYCQ…LKNH, and VCCP…RKKH. The segment at 871–1101 is C-terminal glutamine-rich region; essential for transcriptional activation; sequence QAMTELSQTL…PAGGQQATTQ (231 aa). The segment at 1077-1097 is disordered; that stretch reads VPSTATQGHPDPLEQPAGGQQ.

The protein belongs to the class V-like SAM-binding methyltransferase superfamily.

It is found in the nucleus. Transcriptional activator, essential for early embryonic development and survival of embryonic stem cells (ESCs). Supports cell growth and survival during early development by transcriptionally activating the expression of the translation initiation factor EIF3B, to sustain global translation. Activates the transcription of FLNC. This is PR domain zinc finger protein 10 (prdm10) from Danio rerio (Zebrafish).